The primary structure comprises 549 residues: Cation/acetate symporter ActP (549 aa).

Helical transmembrane passes span 33–53, 77–97, 103–123, 148–168, 183–203, 206–226, 262–282, 303–323, 355–375, 404–424, 428–448, 464–484, and 493–513; these read WQAI…TYWA, LAIA…ALVF, GLIY…LIAE, ILSA…QMVG, IAVV…GMLA, WVQI…AFMV, ISAL…PHIL, GFMG…IMLV, LFLG…VAGL, VSKI…VLFE, IAFM…PIIL, GGWL…TIWV, and IFPY…GIWF.

It belongs to the sodium:solute symporter (SSF) (TC 2.A.21) family.

It is found in the cell inner membrane. Transports acetate. The polypeptide is Cation/acetate symporter ActP (Salmonella gallinarum (strain 287/91 / NCTC 13346)).